A 2205-amino-acid chain; its full sequence is MNVQVAVRVRPFNSREKERNAELIVQMNNKSTILTRPSALRANPLAAPTADDEKSFSFDYSYWSYDSNDPHFASQSTVYNDLGKEVLKNAWDGFNCSIFAYGQTGSGKSYSMMGYGEEKGIIPLICEELFQRIQSTPSNSNEQTIYKTTVSYMEIYNEKVKDLLNPNNNKTGGLKVRNNPSTGPYVEDLSKLAVKSFSEIDMLMDEGSKARTVASTNMNATSSRSHAVFTIVFTQSKIDKTRGTAIDRVSKISLVDLAGSERANSTGATGVRLKEGANINKSLSTLGKVISALAENSTSKKAVFVPYRDSVLTYLLKETLGGNSKTIMIAAISPADINYEESLSTLRYADSAKKIKTVAVVNEDAQSKLIRELQGEVERLRAMMDQGGQYHANDSKLMNSDYDETVSTLNEKIEQYEKLMAELNKSWEEKLSEAEAIREDRMAALKDMGVAIKVVSSIPHLINLNEDPLMSESLIYYVKEGKTRIGRSDSEIPQDIILNGLNIHKEHCIFENINGKVIISPSNNFMNNNNNKENSSSTTPTSSKSPSKPKSEKEKENNNDDDDGEKKLDRSYIYVNGVEINKPTILTTGNRVILGNNHIFRFNNPEEAIKIARERNQTTGGIVSSTKSPVDQIMDYDFALNELASIQGTLAMSKHINDKQEYKKQMRALYDQIRLQLENDCDPEVKEQREKLALLAFRRWRSKVHRSKLLNKISFIILSLNEANAISSTLNKKINLSLKLYSVFPEPDQISDNIEPEIDWRKTQILIKATDSSTGESTLVTDQDFVDRIYLMRELYQNDGRLDTELPEDPFQFTFTKDSLIGVSHVYLKNTLYLVESNRPVPILDENGNQKGYLNLLVSSSSTDITESERGLYLENPSNNKSLLLGKNLEITIGFEGFSEFIDENKFSDVFIKFNFPNQNGTIVDTFLTEPQPISAFIDQKRIVITSLTESLINLLQTQYVSFEIRGHKKSKQQPKLTSSSSSASTTSSSSKNQPMLENFEFLATLNILESEKNTGTDDQYKPVHILEDPDVYNTHLPSVTFRLKKDKTNRQILFKVIKNESNSIIKECKSARISDIKIFGKRDNPLLSSSATPNTPNTPNNSRIAGIQNTPGTPMTPYSNQTNNQQSSSSQPPLPQQQGTPYNPQSNNPNVISNAPPTPNSNLLKDLSLAANVQTSSSSSSSSLNVLLNNQQQQQQSQQSQQQQQQQSQQSSETSSTTNSITNSASNSSLSLLVNNQTTNSNNSGGNIFEIPVLSCTDDSVLLLWKTNDPSFIFNQKTRKGDKILFKLTFDLLIQGFPDVVSISKDIAIKILSSESMPSATMPDGTSSSSMSNLLDKFKTHFKGESILSEPSIHAGSVFSINLTKSRQQEHQNRIGEMIDAHQENILKLGYAMKMEKLRQELDLREKLTNLKEKTIDSTNTDDVNAANGVAESSNSSTIDVEEIVKKMLLMNSTHQQQQQNFSSPSSTSPTLVNGESSPKSGRSSNTTSSSSGGGGGGGRKRSSTIVEVKVKEVPSSALLKEDETSGYLKKKSAFKEEWKPRWFVFKKPYLYYSHNQKDTHKLKKIDLTNSSVAITQDEVPFGFAIIQLRRVWLLQANSVEDRDKWVQTLDPLRKVTELKDEELRTAKQQIEKSSSQLDQIKSQLQTGQQIVLAKQKEIEELTNTISQLQLEKEINTQQFDGLRDEIQNRDEELEQYKSQQSQKINQLSGQVNKLENVTQEKELTIGSLSSTLNNTNQIIELINEQSKSYKNVAEMEIESLRDETTQLRETSQLLANRLKECRSSIQSAESLLSERDLEITQLKALLTQQEESSGITSLNLKNLQSDQTMKQGQIDILSKTVQQSTATIQNISSQLDSTTKASDSKDEQITSINSAYKDESDRLKDQTTQLNSLTTNLRQQMRSLEQTHLQQKETSASDQKTLLLLLHDMEQGLTRASQTITDQSAQVTVLKKQLEDSKKSNEQLPTVEKQLSLMKDRLIQSENQLIDRECENTILSDKLKLWEEEIKIKDSKLSLLENNVKEVRAEYANGMAFSREFSQHHTDSGSISGKFNRRSKQISAEEQMETLRESSIAHQSHNAFLNSQIQRLETEMRTQEKVYSDTIQRIKKDLQQRNQQNIAFMKHQVGDEIVKKMEDVTASMEILKKKYFVSLVVAAKLQNAMMGNICNVDAYELYEQSVVEHILDQDQWPNWIAQTISTQNKHL.

Residues 2 to 355 (NVQVAVRVRP…LRYADSAKKI (354 aa)) enclose the Kinesin motor domain. 102 to 109 (GQTGSGKS) contacts ATP. A coiled-coil region spans residues 362–448 (NEDAQSKLIR…EDRMAALKDM (87 aa)). An FHA domain is found at 483–595 (TRIGRSDSEI…LTTGNRVILG (113 aa)). Residues 525-548 (FMNNNNNKENSSSTTPTSSKSPSK) show a composition bias toward low complexity. Disordered regions lie at residues 525-568 (FMNN…EKKL), 971-993 (SKQQ…SSKN), 1084-1226 (DNPL…TNSA), and 1455-1508 (THQQ…STIV). Residues 549 to 568 (PKSEKEKENNNDDDDGEKKL) are compositionally biased toward basic and acidic residues. Low complexity-rich tracts occupy residues 978-991 (TSSS…SSSS), 1089-1103 (SSSA…PNNS), and 1117-1142 (TPYS…QGTP). Polar residues predominate over residues 1143-1164 (YNPQSNNPNVISNAPPTPNSNL). 2 stretches are compositionally biased toward low complexity: residues 1169 to 1226 (SLAA…TNSA) and 1455 to 1492 (THQQ…TSSS). Residues 1523–1616 (EDETSGYLKK…WVQTLDPLRK (94 aa)) enclose the PH domain. 3 coiled-coil regions span residues 1879–1918 (KDES…ETSA), 1946–2034 (SAQV…NGMA), and 2075–2149 (AHQS…KKKY).

Belongs to the TRAFAC class myosin-kinesin ATPase superfamily. Kinesin family. Unc-104 subfamily. As to quaternary structure, homodimer.

The protein localises to the cytoplasm. Its subcellular location is the cytoskeleton. The protein resides in the cytoplasmic vesicle membrane. In terms of biological role, microtubule-associated force-producing protein that plays a role in organelle transport. Its motor activity is directed toward the microtubule's plus end. Transports cytoplasmic vesicles and particularly phosphatidylinositol 4,5-bisphosphate-containing liposomes along microtubules. The sequence is that of Kinesin-related protein 1 (kif1) from Dictyostelium discoideum (Social amoeba).